The following is a 455-amino-acid chain: Protein FAM124B (455 aa).

Ser49 is subject to Phosphoserine. The tract at residues 270–322 is disordered; that stretch reads TSVSAKRTSEPRSQRNQGKRSQGHSLELPEPSGSPTSDRCAGTSWKSPGRSFQ. Positions 313–322 are enriched in polar residues; sequence SWKSPGRSFQ.

It belongs to the FAM124 family. In terms of assembly, interacts with CHD7 and CHD8.

It localises to the nucleus. The polypeptide is Protein FAM124B (FAM124B) (Homo sapiens (Human)).